The primary structure comprises 342 residues: Alanine racemase (342 aa).

The active-site Proton acceptor; specific for D-alanine is K33. Residue K33 is modified to N6-(pyridoxal phosphate)lysine. Residue R128 coordinates substrate. Y240 serves as the catalytic Proton acceptor; specific for L-alanine. Residue M288 participates in substrate binding.

This sequence belongs to the alanine racemase family. It depends on pyridoxal 5'-phosphate as a cofactor.

The catalysed reaction is L-alanine = D-alanine. Its pathway is amino-acid biosynthesis; D-alanine biosynthesis; D-alanine from L-alanine: step 1/1. Its function is as follows. Catalyzes the interconversion of L-alanine and D-alanine. May also act on other amino acids. This is Alanine racemase (alr) from Jannaschia sp. (strain CCS1).